The sequence spans 1163 residues: GTPase-activating protein (1163 aa).

C2 domains follow at residues 26–148 (PSSN…DHWF) and 261–419 (TTST…SAWY). The Ras-GAP domain occupies 520 to 737 (ERIAPIIKAL…DAVKHFLEVI (218 aa)). The PH domain occupies 762 to 860 (LKEGLMTKYP…WFDLLHKICL (99 aa)). A Btk-type zinc finger spans residues 862–898 (NSIRMQYFHPSAFVSGFYSCCGRSDENSPGCKKVLDK). Zn(2+) is bound by residues His870, Cys881, Cys882, and Cys892. 2 disordered regions span residues 1026–1051 (LNQQ…LQQF) and 1091–1163 (PFHQ…PPIY). The segment covering 1091–1157 (PFHQQQQQHH…APPSTTSSSQ (67 aa)) has biased composition (low complexity).

In terms of assembly, interacts with sty. In third instar larvae eye imaginal disk, expressed in cells posterior to the morphogenetic furrow, in all photoreceptor and cone cell precursors as well as in still uncommitted cells.

Its function is as follows. Inhibitory regulator of the Ras-cyclic AMP pathway. May function as a negative regulator of Ras85D/Ras1 in the sev signaling pathway. Acts cell autonomously in cone cell precursors as a negative regulator of R7 photoreceptor cell determination. This Drosophila melanogaster (Fruit fly) protein is GTPase-activating protein (RasGAP1).